We begin with the raw amino-acid sequence, 234 residues long: Ubiquinone biosynthesis O-methyltransferase (234 aa).

S-adenosyl-L-methionine is bound by residues arginine 39, glycine 59, aspartate 80, and methionine 124.

This sequence belongs to the methyltransferase superfamily. UbiG/COQ3 family.

The catalysed reaction is a 3-demethylubiquinol + S-adenosyl-L-methionine = a ubiquinol + S-adenosyl-L-homocysteine + H(+). It carries out the reaction a 3-(all-trans-polyprenyl)benzene-1,2-diol + S-adenosyl-L-methionine = a 2-methoxy-6-(all-trans-polyprenyl)phenol + S-adenosyl-L-homocysteine + H(+). Its pathway is cofactor biosynthesis; ubiquinone biosynthesis. Functionally, O-methyltransferase that catalyzes the 2 O-methylation steps in the ubiquinone biosynthetic pathway. The polypeptide is Ubiquinone biosynthesis O-methyltransferase (Aliivibrio fischeri (strain ATCC 700601 / ES114) (Vibrio fischeri)).